A 52-amino-acid chain; its full sequence is Large ribosomal subunit protein bL32c (52 aa).

Belongs to the bacterial ribosomal protein bL32 family.

The protein localises to the plastid. The protein resides in the chloroplast. The sequence is that of Large ribosomal subunit protein bL32c from Capsella bursa-pastoris (Shepherd's purse).